The primary structure comprises 209 residues: Probable transcriptional regulator ycf29 (209 aa).

The Response regulatory domain occupies 4 to 120 (NLMLVENDTV…ELVSLIKNLI (117 aa)). D53 is modified (4-aspartylphosphate). Residues 139-204 (PLFQLLYLTP…LLVKYSIKNN (66 aa)) enclose the HTH luxR-type domain.

It is found in the plastid. The protein resides in the chloroplast. This Porphyra purpurea (Red seaweed) protein is Probable transcriptional regulator ycf29 (ycf29).